Here is a 205-residue protein sequence, read N- to C-terminus: FAS-associated death domain protein (205 aa).

Residues 3-81 (PFLVLLHSLS…RHDLLQRLDD (79 aa)) enclose the DED domain. The region spanning 97–181 (LQVAFDIVCD…LVADLVEEAQ (85 aa)) is the Death domain. Residues 181 to 205 (QESVSKSENMSPVLRDSTVSSSETP) form a disordered region. Serine 191 is subject to Phosphoserine.

Can self-associate. Component of the AIM2 PANoptosome complex, a multiprotein complex that drives inflammatory cell death (PANoptosis). Component of the death-induced signaling complex (DISC) composed of cell surface receptor FAS/CD95 or TNFRSF1A, adapter protein FADD and the CASP8 protease; recruitment of CASP8 to the complex is required for processing of CASP8 into the p18 and p10 subunits. Interacts (via death domain) with FAS (via death domain). Interacts directly (via DED domain) with NOL3 (via CARD domain); inhibits death-inducing signaling complex (DISC) assembly by inhibiting the increase in FAS-FADD binding induced by FAS activation. Interacts with CFLAR, PEA15 and MBD4. When phosphorylated, part of a complex containing HIPK3 and FAS. May interact with MAVS/IPS1. Interacts with MOCV v-CFLAR protein and PIDD1. Interacts with RIPK1 and TRADD. Interacts with stimulated TNFRSF10B. Interacts with DDX24.

Its subcellular location is the cytoplasm. In terms of biological role, apoptotic adapter molecule that recruits caspases CASP8 or CASP10 to the activated FAS/CD95 or TNFRSF1A/TNFR-1 receptors. The resulting aggregate called the death-inducing signaling complex (DISC) performs CASP8 proteolytic activation. Active CASP8 initiates the subsequent cascade of caspases mediating apoptosis. Involved in interferon-mediated antiviral immune response, playing a role in the positive regulation of interferon signaling. This chain is FAS-associated death domain protein, found in Mus musculus (Mouse).